Consider the following 597-residue polypeptide: MFS-type transporter FPY5 (597 aa).

Positions 1 to 55 are disordered; that stretch reads MSETTGLPLKHLQGSPPGTPVNTNNESNEASPDDGCRLPDTVTEAEASSDNHGSV. 2 stretches are compositionally biased toward polar residues: residues 20–30 and 46–55; these read PVNTNNESNEA and EASSDNHGSV. N-linked (GlcNAc...) asparagine glycosylation occurs at Asn-25. Residue Asn-72 is glycosylated (N-linked (GlcNAc...) asparagine). 9 helical membrane-spanning segments follow: residues 94–114, 120–140, 147–167, 183–203, 214–234, 241–261, 286–306, 316–336, and 360–380; these read LSLL…VSIV, FNMA…FLII, IFGC…FSMA, FQGM…PLMV, IMSS…GAIT, WVFY…AFSV, VDFV…FALE, SGAI…FIAW, and FVMG…AALI. A glycan (N-linked (GlcNAc...) asparagine) is linked at Asn-390. A run of 5 helical transmembrane segments spans residues 402 to 422, 424 to 444, 463 to 483, 498 to 518, and 562 to 582; these read LPLL…VSKL, VPPL…VGLY, IMGL…PLVV, IRVL…INHI, and EQMR…VLLV.

It belongs to the major facilitator superfamily. TCR/Tet family.

It localises to the membrane. Its pathway is secondary metabolite biosynthesis. In terms of biological role, MFS-type transporter; part of the gene cluster that mediates the biosynthesis of the gamma-pyrones fusapyrone (FPY) and deoxyfusapyrone (dFPY). The chain is MFS-type transporter FPY5 from Fusarium mangiferae (Mango malformation disease fungus).